The sequence spans 341 residues: Methionine import ATP-binding protein MetN 3 (341 aa).

Residues 2–241 enclose the ABC transporter domain; it reads ILLENVKKIY…PQQDITKRFV (240 aa). 38–45 is an ATP binding site; sequence GYSGAGKS.

This sequence belongs to the ABC transporter superfamily. Methionine importer (TC 3.A.1.24) family. As to quaternary structure, the complex is composed of two ATP-binding proteins (MetN), two transmembrane proteins (MetI) and a solute-binding protein (MetQ).

Its subcellular location is the cell membrane. The enzyme catalyses L-methionine(out) + ATP + H2O = L-methionine(in) + ADP + phosphate + H(+). The catalysed reaction is D-methionine(out) + ATP + H2O = D-methionine(in) + ADP + phosphate + H(+). Functionally, part of the ABC transporter complex MetNIQ involved in methionine import. Responsible for energy coupling to the transport system. The sequence is that of Methionine import ATP-binding protein MetN 3 from Bacillus cereus (strain ZK / E33L).